The following is a 555-amino-acid chain: Urocanate hydratase (555 aa).

Residues 52–53 (GG), Gln130, 176–178 (GMG), Glu196, Arg201, 242–243 (NA), 263–267 (QTSAH), 273–274 (YL), and Tyr322 contribute to the NAD(+) site. Cys410 is a catalytic residue. Gly492 provides a ligand contact to NAD(+).

Belongs to the urocanase family. NAD(+) is required as a cofactor.

The protein localises to the cytoplasm. The catalysed reaction is 4-imidazolone-5-propanoate = trans-urocanate + H2O. The protein operates within amino-acid degradation; L-histidine degradation into L-glutamate; N-formimidoyl-L-glutamate from L-histidine: step 2/3. Its function is as follows. Catalyzes the conversion of urocanate to 4-imidazolone-5-propionate. This chain is Urocanate hydratase, found in Shewanella putrefaciens (strain CN-32 / ATCC BAA-453).